The primary structure comprises 366 residues: Chaperone protein DnaJ (366 aa).

A J domain is found at Asp5 to Gly69. A CR-type zinc finger spans residues Gly128–Arg210. Positions 141, 144, 158, 161, 184, 187, 198, and 201 each coordinate Zn(2+). CXXCXGXG motif repeat units follow at residues Cys141 to Gly148, Cys158 to Gly165, Cys184 to Gly191, and Cys198 to Gly205.

Belongs to the DnaJ family. As to quaternary structure, homodimer. The cofactor is Zn(2+).

It is found in the cytoplasm. In terms of biological role, participates actively in the response to hyperosmotic and heat shock by preventing the aggregation of stress-denatured proteins and by disaggregating proteins, also in an autonomous, DnaK-independent fashion. Unfolded proteins bind initially to DnaJ; upon interaction with the DnaJ-bound protein, DnaK hydrolyzes its bound ATP, resulting in the formation of a stable complex. GrpE releases ADP from DnaK; ATP binding to DnaK triggers the release of the substrate protein, thus completing the reaction cycle. Several rounds of ATP-dependent interactions between DnaJ, DnaK and GrpE are required for fully efficient folding. Also involved, together with DnaK and GrpE, in the DNA replication of plasmids through activation of initiation proteins. The protein is Chaperone protein DnaJ of Bacillus cytotoxicus (strain DSM 22905 / CIP 110041 / 391-98 / NVH 391-98).